The chain runs to 713 residues: Protein argonaute (713 aa).

The segment at 18 to 129 is N-terminal domain; sequence EFIPKEVHFY…IKNIRKHKVV (112 aa). The region spanning 164 to 257 is the PAZ domain; it reads HLWDFVNRDK…FAPQFCNLVF (94 aa). Residues 213 to 218 form a binds 3'-end of gDNA region; sequence HIIKYY. Positions 346–488 are mid domain; sequence DVPEIIRNKN…QIMGKLGIKY (143 aa). Residues 426-699 form the Piwi domain; it reads CFALIIGKEK…FVKALGKNWK (274 aa). A divalent metal cation-binding residues include glutamine 457, glutamine 479, and lysine 483. The tract at residues 457 to 460 is binds 5'-phosphorylated end of gDNA; sequence QNIL. Catalysis depends on residues aspartate 504, glutamate 541, and aspartate 570. Aspartate 504 is a binding site for Mn(2+). Aspartate 570 contacts Mn(2+). 2 binds 5'-phosphorylated end of gDNA regions span residues 625-632 and 678-679; these read HKTPFGSN and LR. Aspartate 688 is an active-site residue. 2 residues coordinate Mn(2+): aspartate 688 and isoleucine 713.

This sequence belongs to the argonaute family. Long pAgo subfamily. A divalent metal cation is required as a cofactor.

Its activity is regulated as follows. DNA cleavage is inhibited by EDTA. Functionally, a DNA-guided ssDNA endonuclease that may play a role in defense against invading genetic elements. Uses short ssDNA sequences as guides (gDNA) to bind complementary target strands, resulting in slicing of the target DNA (tDNA). Endonucleolytically cleaves tDNA (the gDNA indicates where to cleave); two major and two minor products are seen which correspond to cleavage sites between nucleotides 9/10, 10/11, 13/14, and 14/15 downstream of the target residue base-paired with the 5'-end of the gDNA. Efficient guide-dependent tDNA cleavage requires a minimal length of 15 bp and is maximal at 19 bp. Prefers gDNA with 5'-phosphorylated purines and 3'-pyrimidines; changing these bases alters the cleavage activity and patterns. Also has guide-independent activity on tDNA called 'chopping'. Probably a first round of guide-independent activity on an invading plasmid or virus would generate guide DNAs for subsequent, more efficient, guide-dependent degradation of invading nucleic acids. Has no activity on substrate with a mismatch at positions 10 and 11, on ssDNA or RNA, nor on DNA:RNA hybrids. Digests longer (750 bp) dsDNA as well as circular plasmid and naked genomic DNA, but not chromatin, in a guide DNA-independent manner. Addition of endogenous histone A3 protects DNA from cleavage, while cleavage is insensitive to methylation. When plasmid encoding active or mutated protein (Ala-541) is transformed into Sulfolobus acidocaldarius about 25-fold fewer transformants are found with active protein; reduced levels of plasmid are found in wild-type transformed cells. While S.acidocaldarius grows at a similar temperature to M.jannaschii (70 to 80 degrees Celsius) it has very different histone-like proteins, which presumably do not protect against MjAgo. Binds ssDNA, dsDNA and DNA-RNA hybrids; binding is most efficient with dsDNA. In Methanocaldococcus jannaschii (strain ATCC 43067 / DSM 2661 / JAL-1 / JCM 10045 / NBRC 100440) (Methanococcus jannaschii), this protein is Protein argonaute.